The primary structure comprises 571 residues: Acetolactate synthase large subunit (571 aa).

Residue Glu-51 participates in thiamine diphosphate binding. FAD contacts are provided by residues Arg-153, 261 to 282, and 304 to 323; these read HGTY…IGVR and DIDP…IVGD. The thiamine pyrophosphate binding stretch occupies residues 394-474; sequence QHQMFTALYY…VLILNLNNSS (81 aa). 2 residues coordinate Mg(2+): Asp-445 and Asn-472.

The protein belongs to the TPP enzyme family. Dimer of large and small chains. Mg(2+) is required as a cofactor. It depends on thiamine diphosphate as a cofactor.

It catalyses the reaction 2 pyruvate + H(+) = (2S)-2-acetolactate + CO2. The protein operates within amino-acid biosynthesis; L-isoleucine biosynthesis; L-isoleucine from 2-oxobutanoate: step 1/4. It functions in the pathway amino-acid biosynthesis; L-valine biosynthesis; L-valine from pyruvate: step 1/4. This is Acetolactate synthase large subunit (ilvI) from Buchnera aphidicola subsp. Acyrthosiphon pisum (strain APS) (Acyrthosiphon pisum symbiotic bacterium).